Here is a 104-residue protein sequence, read N- to C-terminus: Large ribosomal subunit protein uL23 (104 aa).

The protein belongs to the universal ribosomal protein uL23 family. In terms of assembly, part of the 50S ribosomal subunit. Contacts protein L29, and trigger factor when it is bound to the ribosome.

One of the early assembly proteins it binds 23S rRNA. One of the proteins that surrounds the polypeptide exit tunnel on the outside of the ribosome. Forms the main docking site for trigger factor binding to the ribosome. The protein is Large ribosomal subunit protein uL23 of Burkholderia multivorans (strain ATCC 17616 / 249).